Here is a 122-residue protein sequence, read N- to C-terminus: Small ribosomal subunit protein uS13 (122 aa).

The tract at residues 93 to 122 (RRGLPVRGQRTKTNARTRKGPKKTIAGKKK) is disordered.

Belongs to the universal ribosomal protein uS13 family. In terms of assembly, part of the 30S ribosomal subunit. Forms a loose heterodimer with protein S19. Forms two bridges to the 50S subunit in the 70S ribosome.

In terms of biological role, located at the top of the head of the 30S subunit, it contacts several helices of the 16S rRNA. In the 70S ribosome it contacts the 23S rRNA (bridge B1a) and protein L5 of the 50S subunit (bridge B1b), connecting the 2 subunits; these bridges are implicated in subunit movement. Contacts the tRNAs in the A and P-sites. In Corynebacterium kroppenstedtii (strain DSM 44385 / JCM 11950 / CIP 105744 / CCUG 35717), this protein is Small ribosomal subunit protein uS13.